The chain runs to 360 residues: Phospho-N-acetylmuramoyl-pentapeptide-transferase (360 aa).

Transmembrane regions (helical) follow at residues 25 to 45, 71 to 91, 94 to 114, 129 to 148, 168 to 188, 199 to 219, 239 to 259, 263 to 283, 288 to 308, and 337 to 357; these read TGGAMVTGALFVFMFGPWIID, TPTMGGLMILSGLVVGTVLWA, LNPYVWIVLAVTLGFGFVGFY, SGRTRLAIETIIAAAACYAL, TAIYLGWFFVIFGGFIVVGAG, GLAIVPVMIAAASFGLVSYLA, LAVLCGALLGAGLGFLWFNAP, IFMGDTGSLALGGMLGTIAVA, FVLAVIGGLFVLEAVSVIVQV, and QIVIRFWIISVMLALAGLSTL.

This sequence belongs to the glycosyltransferase 4 family. MraY subfamily. Requires Mg(2+) as cofactor.

The protein resides in the cell inner membrane. The catalysed reaction is UDP-N-acetyl-alpha-D-muramoyl-L-alanyl-gamma-D-glutamyl-meso-2,6-diaminopimeloyl-D-alanyl-D-alanine + di-trans,octa-cis-undecaprenyl phosphate = di-trans,octa-cis-undecaprenyl diphospho-N-acetyl-alpha-D-muramoyl-L-alanyl-D-glutamyl-meso-2,6-diaminopimeloyl-D-alanyl-D-alanine + UMP. The protein operates within cell wall biogenesis; peptidoglycan biosynthesis. In terms of biological role, catalyzes the initial step of the lipid cycle reactions in the biosynthesis of the cell wall peptidoglycan: transfers peptidoglycan precursor phospho-MurNAc-pentapeptide from UDP-MurNAc-pentapeptide onto the lipid carrier undecaprenyl phosphate, yielding undecaprenyl-pyrophosphoryl-MurNAc-pentapeptide, known as lipid I. In Rhodopseudomonas palustris (strain BisA53), this protein is Phospho-N-acetylmuramoyl-pentapeptide-transferase.